The chain runs to 612 residues: UBA domain-containing protein 6 (612 aa).

Residues 3–42 (DLDTKIKTLKNMGVSESDAKDSLERCGYDVESAAEFIFSG) form the UBA domain. Phosphoserine is present on Ser595.

The protein resides in the cytoplasm. It is found in the nucleus. In Schizosaccharomyces pombe (strain 972 / ATCC 24843) (Fission yeast), this protein is UBA domain-containing protein 6 (ucp6).